A 400-amino-acid chain; its full sequence is Acetate kinase (400 aa).

A Mg(2+)-binding site is contributed by asparagine 10. Position 17 (lysine 17) interacts with ATP. Arginine 91 provides a ligand contact to substrate. Aspartate 150 functions as the Proton donor/acceptor in the catalytic mechanism. ATP-binding positions include 210–214, 285–287, and 333–337; these read HLGGG, DFR, and GIGEN. Glutamate 387 provides a ligand contact to Mg(2+).

Belongs to the acetokinase family. Homodimer. Mg(2+) serves as cofactor. It depends on Mn(2+) as a cofactor.

It is found in the cytoplasm. It catalyses the reaction acetate + ATP = acetyl phosphate + ADP. It participates in metabolic intermediate biosynthesis; acetyl-CoA biosynthesis; acetyl-CoA from acetate: step 1/2. Functionally, catalyzes the formation of acetyl phosphate from acetate and ATP. Can also catalyze the reverse reaction. The polypeptide is Acetate kinase (Buchnera aphidicola subsp. Baizongia pistaciae (strain Bp)).